A 289-amino-acid chain; its full sequence is Urease accessory protein UreD (289 aa).

The protein belongs to the UreD family. UreD, UreF and UreG form a complex that acts as a GTP-hydrolysis-dependent molecular chaperone, activating the urease apoprotein by helping to assemble the nickel containing metallocenter of UreC. The UreE protein probably delivers the nickel.

Its subcellular location is the cytoplasm. Its function is as follows. Required for maturation of urease via the functional incorporation of the urease nickel metallocenter. This is Urease accessory protein UreD from Xanthobacter autotrophicus (strain ATCC BAA-1158 / Py2).